The chain runs to 255 residues: Small ribosomal subunit protein uS2 (255 aa).

Belongs to the universal ribosomal protein uS2 family.

In Streptococcus pyogenes serotype M3 (strain ATCC BAA-595 / MGAS315), this protein is Small ribosomal subunit protein uS2.